Consider the following 391-residue polypeptide: G-patch domain-containing protein 1 (391 aa).

Positions 15–61 (KDSAAFKLMKSMGWEEGEGLGKDKQGIKGYVRVTNKQDTSGVGLDKP) constitute a G-patch domain. Disordered stretches follow at residues 80-132 (VQAA…EKGK) and 212-307 (KASE…PAKR). Acidic residues-rich tracts occupy residues 92 to 102 (DDSDKEDESED) and 265 to 295 (NSDDDDDDDDDDDEEDEEEDEDESEADDDDK). Positions 305 to 312 (AKRKHDEI) match the Nuclear localization signal motif.

In terms of tissue distribution, strongly expressed in tissues with high cell proliferation activity that have a high demand for ribosome production such as shoot tips, leaves primordia, root tips and floral buds.

The protein resides in the nucleus. Its subcellular location is the nucleolus. Functionally, involved in ribosome biogenesis, required for normal progression of rRNA processing. Seems to promote cell proliferation in leaves. The sequence is that of G-patch domain-containing protein 1 from Arabidopsis thaliana (Mouse-ear cress).